A 336-amino-acid chain; its full sequence is Aldo-keto reductase str7 (336 aa).

Residue aspartate 57 participates in NADP(+) binding. Tyrosine 62 acts as the Proton donor in catalysis. Substrate is bound at residue histidine 124. NADP(+) contacts are provided by residues 154–155 (SE), glutamine 174, 206–220 (SPLG…YKSP), and 283–291 (KKIKYLEEN).

This sequence belongs to the aldo/keto reductase family. Aldo/keto reductase 2 subfamily.

It participates in mycotoxin biosynthesis. In terms of biological role, aldo-keto reductase; part of the gene cluster that mediates the biosynthesis of strobilurin A, an antifungal polyketide that contains a key beta-methoxyacrylate toxophore that targets the complex III of the mitochondrial electron transport chain. Strobilurin biosynthesis begins with construction of benzoyl CoA by step-wise elimination of ammonia from phenylalanine by the phenylalanine ammonia-lyase str11, oxygenation by str8 and retro-Claisen reaction to form benzoic acid, which is activated to its CoA thiolester benzoyl CoA by the dedicated CoA ligase str10. Benzoyl CoA forms the starter unit for the highly reducing polyketide synthase stpks1 that produces the polyketide prestrobilutin A. The FAD-dependent oxygenase str9 then catalyzes the key oxidative rearrangement responsible for the creation of the beta-methoxyacrylate toxophore. Str9 performs epoxidation of the 2,3 olefin of prestrobilutin A, followed by Meinwald rearrangement to furnish the aldehyde intermediate. Rapid enolization of the aldehyde intermediate would give the beta-methoxyacrylate skeleton and methylations catalyzed by str2 and str3 complete the synthesis and lead to the production of strobilurin A. The short-chain dehydrogenase stl2 and the dehydrogenase str4 play a role in the shunt pathway leading to the production of bolineol. The cluster encodes no obvious halogenase gene that could be involved in production of strobilurin B, nor any obvious dimethylallyl-transferase that could be involved in the production of strobilurin G. It is possible that unknown proteins encoded in, or near, the cluster (such as str1 or stl1) may form new classes of halogenases or dimethylally-transferases, or that the responsible genes are located elsewhere on the genome. Similarly, proteins encoded by str5/str6 hydrolases appear to have no chemical role in the biosynthesis of strobilurin A. Finally, no obvious self-resistance gene is found within the cluster. This chain is Aldo-keto reductase str7, found in Strobilurus tenacellus.